The chain runs to 358 residues: Photosystem II protein D1 2 (358 aa).

Transmembrane regions (helical) follow at residues 28–45, 117–132, and 141–155; these read YVGW…AATI, HFLI…QWEL, and WICV…AAMA. Chlorophyll a is bound at residue His-117. Tyr-125 is a binding site for pheophytin a. The [CaMn4O5] cluster site is built by Asp-169 and Glu-188. Residues 196 to 217 traverse the membrane as a helical segment; that stretch reads FHMLGVAGVFGGSLFSAMHGSL. Chlorophyll a is bound at residue His-197. A quinone is bound by residues His-214 and 263 to 264; that span reads SF. His-214 contacts Fe cation. Position 271 (His-271) interacts with Fe cation. The helical transmembrane segment at 273–287 threads the bilayer; that stretch reads FLGAWPVVGIWFTSM. [CaMn4O5] cluster is bound by residues His-331, Glu-332, Asp-341, and Ala-343. The propeptide occupies 344-358; that stretch reads AAESTPVALQAPAIG.

This sequence belongs to the reaction center PufL/M/PsbA/D family. As to quaternary structure, PSII is composed of 1 copy each of membrane proteins PsbA, PsbB, PsbC, PsbD, PsbE, PsbF, PsbH, PsbI, PsbJ, PsbK, PsbL, PsbM, PsbT, PsbX, PsbY, PsbZ, Psb30/Ycf12, peripheral proteins PsbO, CyanoQ (PsbQ), PsbU, PsbV and a large number of cofactors. It forms dimeric complexes. It depends on The D1/D2 heterodimer binds P680, chlorophylls that are the primary electron donor of PSII, and subsequent electron acceptors. It shares a non-heme iron and each subunit binds pheophytin, quinone, additional chlorophylls, carotenoids and lipids. D1 provides most of the ligands for the Mn4-Ca-O5 cluster of the oxygen-evolving complex (OEC). There is also a Cl(-1) ion associated with D1 and D2, which is required for oxygen evolution. The PSII complex binds additional chlorophylls, carotenoids and specific lipids. as a cofactor. In terms of processing, tyr-160 forms a radical intermediate that is referred to as redox-active TyrZ, YZ or Y-Z. C-terminally processed by CtpA; processing is essential to allow assembly of the oxygen-evolving complex and thus photosynthetic growth.

It localises to the cellular thylakoid membrane. The catalysed reaction is 2 a plastoquinone + 4 hnu + 2 H2O = 2 a plastoquinol + O2. Functionally, photosystem II (PSII) is a light-driven water:plastoquinone oxidoreductase that uses light energy to abstract electrons from H(2)O, generating O(2) and a proton gradient subsequently used for ATP formation. It consists of a core antenna complex that captures photons, and an electron transfer chain that converts photonic excitation into a charge separation. The D1/D2 (PsbA/PsbD) reaction center heterodimer binds P680, the primary electron donor of PSII as well as several subsequent electron acceptors. The polypeptide is Photosystem II protein D1 2 (Synechococcus sp. (strain CC9605)).